A 122-amino-acid polypeptide reads, in one-letter code: Large ribosomal subunit protein uL14 (122 aa).

It belongs to the universal ribosomal protein uL14 family. As to quaternary structure, part of the 50S ribosomal subunit. Forms a cluster with proteins L3 and L19. In the 70S ribosome, L14 and L19 interact and together make contacts with the 16S rRNA in bridges B5 and B8.

Binds to 23S rRNA. Forms part of two intersubunit bridges in the 70S ribosome. The protein is Large ribosomal subunit protein uL14 of Streptomyces griseus subsp. griseus (strain JCM 4626 / CBS 651.72 / NBRC 13350 / KCC S-0626 / ISP 5235).